The chain runs to 265 residues: Thiazole synthase (265 aa).

The active-site Schiff-base intermediate with DXP is lysine 106. 1-deoxy-D-xylulose 5-phosphate-binding positions include glycine 167, 193–194 (AG), and 215–216 (NT). Residues 245-265 (GRIPRRARAEPSSPQLGLVGS) form a disordered region.

Belongs to the ThiG family. Homotetramer. Forms heterodimers with either ThiH or ThiS.

Its subcellular location is the cytoplasm. It catalyses the reaction [ThiS sulfur-carrier protein]-C-terminal-Gly-aminoethanethioate + 2-iminoacetate + 1-deoxy-D-xylulose 5-phosphate = [ThiS sulfur-carrier protein]-C-terminal Gly-Gly + 2-[(2R,5Z)-2-carboxy-4-methylthiazol-5(2H)-ylidene]ethyl phosphate + 2 H2O + H(+). It functions in the pathway cofactor biosynthesis; thiamine diphosphate biosynthesis. Functionally, catalyzes the rearrangement of 1-deoxy-D-xylulose 5-phosphate (DXP) to produce the thiazole phosphate moiety of thiamine. Sulfur is provided by the thiocarboxylate moiety of the carrier protein ThiS. In vitro, sulfur can be provided by H(2)S. The sequence is that of Thiazole synthase from Methylobacterium sp. (strain 4-46).